A 424-amino-acid polypeptide reads, in one-letter code: Dihydroorotase (424 aa).

Zn(2+)-binding residues include His61 and His63. Substrate is bound by residues 63–65 (HLR) and Asn95. Positions 153, 180, and 233 each coordinate Zn(2+). Residue Asn279 participates in substrate binding. A Zn(2+)-binding site is contributed by Asp306. Asp306 is an active-site residue. His310 is a binding site for substrate.

This sequence belongs to the metallo-dependent hydrolases superfamily. DHOase family. Class I DHOase subfamily. Zn(2+) is required as a cofactor.

The enzyme catalyses (S)-dihydroorotate + H2O = N-carbamoyl-L-aspartate + H(+). Its pathway is pyrimidine metabolism; UMP biosynthesis via de novo pathway; (S)-dihydroorotate from bicarbonate: step 3/3. In terms of biological role, catalyzes the reversible cyclization of carbamoyl aspartate to dihydroorotate. This Citrifermentans bemidjiense (strain ATCC BAA-1014 / DSM 16622 / JCM 12645 / Bem) (Geobacter bemidjiensis) protein is Dihydroorotase.